A 211-amino-acid chain; its full sequence is Small ribosomal subunit protein uS5 (211 aa).

The tract at residues 1-41 (MPGRERRDGGRSADDNKQNDRNERRGGGRRDDRRNQQQDER) is disordered. The S5 DRBM domain maps to 44-107 (YIERVVTINR…EEARKNFFRV (64 aa)).

It belongs to the universal ribosomal protein uS5 family. In terms of assembly, part of the 30S ribosomal subunit. Contacts proteins S4 and S8.

In terms of biological role, with S4 and S12 plays an important role in translational accuracy. Its function is as follows. Located at the back of the 30S subunit body where it stabilizes the conformation of the head with respect to the body. This is Small ribosomal subunit protein uS5 from Corynebacterium glutamicum (strain R).